We begin with the raw amino-acid sequence, 397 residues long: Histidinol-phosphate aminotransferase (397 aa).

K247 is modified (N6-(pyridoxal phosphate)lysine).

The protein belongs to the class-II pyridoxal-phosphate-dependent aminotransferase family. Histidinol-phosphate aminotransferase subfamily. In terms of assembly, homodimer. It depends on pyridoxal 5'-phosphate as a cofactor.

The catalysed reaction is L-histidinol phosphate + 2-oxoglutarate = 3-(imidazol-4-yl)-2-oxopropyl phosphate + L-glutamate. The protein operates within amino-acid biosynthesis; L-histidine biosynthesis; L-histidine from 5-phospho-alpha-D-ribose 1-diphosphate: step 7/9. The protein is Histidinol-phosphate aminotransferase of Frankia casuarinae (strain DSM 45818 / CECT 9043 / HFP020203 / CcI3).